A 437-amino-acid polypeptide reads, in one-letter code: Putative ABC transporter ATP-binding protein CTC_00753 (437 aa).

ABC transporter domains lie at 1–143 (MERE…LPTI) and 179–416 (LKFK…QISK). 219-226 (GENGAGKS) provides a ligand contact to ATP.

The protein belongs to the ABC transporter superfamily.

The protein localises to the cell membrane. In terms of biological role, probably part of an ABC transporter complex. Responsible for energy coupling to the transport system. This chain is Putative ABC transporter ATP-binding protein CTC_00753, found in Clostridium tetani (strain Massachusetts / E88).